We begin with the raw amino-acid sequence, 479 residues long: Anaerobic nitric oxide reductase flavorubredoxin (479 aa).

Positions 30–210 (LRGSSYNSYL…PFSRLVTPKI (181 aa)) are zinc metallo-hydrolase. 6 residues coordinate Fe cation: His-79, Glu-81, Asp-83, His-147, Asp-166, and His-227. The Flavodoxin-like domain maps to 254 to 393 (ITIFYDTMSN…LCREHGREIA (140 aa)). Residues 260 to 264 (TMSNN) and 342 to 369 (AFGS…EMSL) each bind FMN. Positions 423 to 474 (GPRMQCSVCQWIYDPAKGEPMQDVAPGTPWSEVPDNFLCPECSLGKDVFEEL) constitute a Rubredoxin-like domain. Fe cation is bound by residues Cys-428, Cys-431, Cys-461, and Cys-464.

It in the N-terminal section; belongs to the zinc metallo-hydrolase group 3 family. As to quaternary structure, homotetramer. Requires Fe cation as cofactor. The cofactor is FMN.

The protein resides in the cytoplasm. It functions in the pathway nitrogen metabolism; nitric oxide reduction. In terms of biological role, anaerobic nitric oxide reductase; uses NADH to detoxify nitric oxide (NO), protecting several 4Fe-4S NO-sensitive enzymes. Has at least 2 reductase partners, only one of which (NorW, flavorubredoxin reductase) has been identified. NO probably binds to the di-iron center; electrons enter from the NorW at rubredoxin and are transferred sequentially to the FMN center and the di-iron center. Also able to function as an aerobic oxygen reductase. This chain is Anaerobic nitric oxide reductase flavorubredoxin, found in Escherichia coli O139:H28 (strain E24377A / ETEC).